A 561-amino-acid polypeptide reads, in one-letter code: DNA ligase B (561 aa).

Lys125 acts as the N6-AMP-lysine intermediate in catalysis.

This sequence belongs to the NAD-dependent DNA ligase family. LigB subfamily.

It catalyses the reaction NAD(+) + (deoxyribonucleotide)n-3'-hydroxyl + 5'-phospho-(deoxyribonucleotide)m = (deoxyribonucleotide)n+m + AMP + beta-nicotinamide D-nucleotide.. Functionally, catalyzes the formation of phosphodiester linkages between 5'-phosphoryl and 3'-hydroxyl groups in double-stranded DNA using NAD as a coenzyme and as the energy source for the reaction. In Salmonella paratyphi A (strain AKU_12601), this protein is DNA ligase B.